Here is a 1028-residue protein sequence, read N- to C-terminus: Unconventional myosin-Ic (1028 aa).

At M1 the chain carries N-acetylmethionine. One can recognise a Myosin motor domain in the interval 12 to 696 (GVQDFVLLEN…TLFATEDALE (685 aa)). Residues N53, Y61, 104 to 113 (SGESGAGKTE), and 157 to 161 (NDNSS) each bind ATP. Position 348 is an N6-methyllysine (K348). The tract at residues 573–595 (LSKLMEILMSKQPSYVRCIKPND) is actin-binding. 2 consecutive IQ domains span residues 699–728 (KHSIATFLQARWRGYHQRQKFLHMKHSAVE) and 722–751 (MKHSAVEIQSWWRGTIGRRKAAKRKWAVDV). The 175-residue stretch at 850-1024 (KDNYPQSVPR…NGHLSVVAPR (175 aa)) folds into the TH1 domain.

It belongs to the TRAFAC class myosin-kinesin ATPase superfamily. Myosin family. Interacts (via its IQ motifs) with calmodulin. As to expression, expressed in brain and the sacculus of the internal ear.

It localises to the cytoplasm. The protein resides in the cell membrane. It is found in the cell projection. The protein localises to the ruffle membrane. Its subcellular location is the cytoplasmic vesicle. It localises to the stereocilium membrane. Functionally, myosins are actin-based motor molecules with ATPase activity. Unconventional myosins serve in intracellular movements. Their highly divergent tails are presumed to bind to membranous compartments, which would be moved relative to actin filaments. This Aquarana catesbeiana (American bullfrog) protein is Unconventional myosin-Ic (Myo1c).